A 31-amino-acid chain; its full sequence is Sarcolipin (31 aa).

At 1 to 7 the chain is on the cytoplasmic side; it reads MERSTRE. Residues 8 to 26 traverse the membrane as a helical segment; sequence LCLNFTVVLITVILIWLLV. The Lumenal segment spans residues 27–31; the sequence is RSYQY.

Belongs to the sarcolipin family. As to quaternary structure, homooligomer. Can also form heterooligomers with other sarcoplasmic/endoplasmic reticulum calcium ATPase (SERCA) regulators ARLN, ERLN, PLN and STRIT1/DWORF. Monomer. Interacts with calcium ATPase ATP2A1/SERCA1. Interacts as a monomer with ATP2A2/SERCA2; the interaction decreases ATP2A2 Ca(2+) affinity. Interacts with VMP1; VMP1 competes with PLN and SLN to prevent them from forming an inhibitory complex with ATP2A2. As to expression, skeletal muscle (at protein level).

It localises to the sarcoplasmic reticulum membrane. The protein resides in the endoplasmic reticulum membrane. In terms of biological role, reversibly inhibits the activity of ATP2A1/SERCA1 and ATP2A2/SERCA2 in sarcoplasmic reticulum by decreasing the apparent affinity of the ATPase for Ca(2+). Also inhibits the activity of ATP2A3/SERCA3. Modulates calcium re-uptake during muscle relaxation and plays an important role in calcium homeostasis in muscle. Required for muscle-based, non-shivering thermogenesis. The protein is Sarcolipin (SLN) of Oryctolagus cuniculus (Rabbit).